Here is a 742-residue protein sequence, read N- to C-terminus: Collectin-12 (742 aa).

Topologically, residues 1–37 (MKDDFAEEEEVQSFGYKRFGIQEGTQCTKCKNNWALK) are cytoplasmic. A helical; Signal-anchor for type II membrane protein transmembrane segment spans residues 38–58 (FSIVLLYILCALLTITVAILG). Over 59–742 (YKVVEKMDNV…EREAVPSSIL (684 aa)) the chain is Extracellular. An N-linked (GlcNAc...) asparagine glycan is attached at Asn-67. Residues 73–142 (ETSHQTYDNK…KDTLEKLQAN (70 aa)) adopt a coiled-coil conformation. 2 N-linked (GlcNAc...) asparagine glycosylation sites follow: Asn-159 and Asn-168. Positions 205–254 (NLNNLNLTQVQQRNLISNLQQSVDDTSLAIQRIKNDFQNLQQVFLQAKKD) form a coiled coil. N-linked (GlcNAc...) asparagine glycosylation is present at Asn-271. Residues 439-608 (TILQGPPGPR…TPASEVNGCP (170 aa)) are disordered. 2 consecutive Collagen-like domains span residues 452–511 (GDRG…KGSR) and 527–586 (GPPG…PGPS). The span at 501–514 (SKGSQGPKGSRGSP) shows a compositional bias: low complexity. The segment covering 516–532 (KPGPQGPSGDPGPPGPP) has biased composition (pro residues). Positions 534–556 (KDGLPGPQGPPGFQGLQGTVGEP) are enriched in low complexity. The segment covering 571-585 (PGMPGPKGPPGPPGP) has biased composition (pro residues). 3 cysteine pairs are disulfide-bonded: Cys-607–Cys-618, Cys-635–Cys-730, and Cys-708–Cys-722. The region spanning 614 to 731 (FTDKCYYFSL…CDEINNFICE (118 aa)) is the C-type lectin domain. Residues Phe-644, Asn-646, Glu-650, Asp-670, and Glu-674 each coordinate Ca(2+). A carbohydrate is bound by residues Lys-691, Gln-694, and Asp-696. The Ca(2+) site is built by Gln-694, Asp-696, Asn-697, Glu-706, Asp-707, Asn-718, Asp-719, and Glu-731. An a carbohydrate-binding site is contributed by Glu-706. Asn-718 and Asp-719 together coordinate a carbohydrate.

The extracellular domain forms a stable trimer. The extracellular domain interacts with fibrillar amyloid-beta peptide. In terms of tissue distribution, expressed in vascular endothelial cells in the heart, in perivascular macrophage and smooth muscle cells. Expressed in plaques-surrounding reactive astrocytes located in cerebral cortex and hippocampus and in leptomeningeal vessels showing characteristics of cerebral amyloid angiopathy (CAA) in a double transgenic mouse model of Alzheimer disease (at protein level). Strongly expressed in lung. Moderately expressed in heart, skeletal muscle, spleen, liver, brain, colon, testis, stomach and kidney. Expressed in neonatal astrocytes. Expressed in reactive astrocytes and vascular/perivascular cells in the brain of a double transgenic mouse model of Alzheimer disease.

The protein localises to the membrane. Functionally, scavenger receptor that displays several functions associated with host defense. Promotes binding and phagocytosis of Gram-positive, Gram-negative bacteria and yeast. Also binds to sialyl Lewis X or a trisaccharide and asialo-orosomucoid (ASOR). Mediates the recognition, internalization and degradation of oxidatively modified low density lipoprotein (oxLDL) by vascular endothelial cells. Binds to several carbohydrates including Gal-type ligands, D-galactose, L- and D-fucose, GalNAc, T and Tn antigens in a calcium-dependent manner and internalizes specifically GalNAc in nurse-like cells. In Mus musculus (Mouse), this protein is Collectin-12 (Colec12).